A 76-amino-acid chain; its full sequence is Senegalin (76 aa).

Positions 1-22 (MLSLKKSMLLLFFLGMVSFSLA) are cleaved as a signal peptide. The propeptide occupies 23–55 (NKRSDGKRADEEGEDKRADEEGEDKRADEEGED). The segment at 24–54 (KRSDGKRADEEGEDKRADEEGEDKRADEEGE) is disordered. Position 75 is a leucine amide (L75).

Expressed by the skin glands.

Its subcellular location is the secreted. In terms of biological role, antimicrobial peptide with activity against the Gram-positive bacterium S.aureus NCTC 10788 (MIC=50 um) and the yeast C.albicans NCPF 1467 (MIC=150 uM). Ineffective against the Gram-negative bacterium E.coli NCTC 10418. Induces a dose-dependent contraction of rat urinary bladder smooth muscle (EC50=2.9 nM) and a dose-dependent relaxation of rat tail artery smooth muscle (EC50=37.7 nM). The chain is Senegalin from Kassina senegalensis (Senegal running frog).